A 992-amino-acid chain; its full sequence is Disks large-associated protein 1 (992 aa).

Disordered regions lie at residues 150–209 and 355–376; these read TKSH…SWWS and KAMG…PKVA. At S169 the chain carries Phosphoserine. The segment covering 194 to 209 has biased composition (low complexity); sequence RSNASNASPTSPSWWS. S362, S365, S368, S372, S389, S418, S421, S425, S428, S437, S509, S516, and S578 each carry phosphoserine. Position 579 is a phosphothreonine (T579). Phosphoserine is present on residues S581 and S605. At T606 the chain carries Phosphothreonine. S608 and S611 each carry phosphoserine. 2 interaction with DYL2 regions span residues 665-676 and 687-698; these read LSIGIQVDDAEE and NKFQSVGVQVEE. The segment at 914 to 980 is disordered; it reads WKQMDPLDKK…QNSATESAES (67 aa). Composition is skewed to basic and acidic residues over residues 918–927 and 943–958; these read DPLDKKERRA and IRER…EARK. A Phosphoserine modification is found at S947. The segment covering 969–978 has biased composition (polar residues); sequence VRQNSATESA. A PDZ-binding motif is present at residues 990–992; that stretch reads TRL.

Belongs to the SAPAP family. In terms of assembly, interacts with the guanylate kinase-like domain of DLG1, DLG2, DLG3, DLG4 and AIP1. Interacts with the PDZ domain of SHANK1, SHANK2 and SHANK3. Found in a complex with DLG4 and SHANK1, SHANK2 or SHANK3. Found in a complex with DLG4 and BEGAIN. Interacts with DYL2 and LRFN1. Interacts with MPP2 (via the SH3-Guanylate kinase-like sub-module). Ubiquitinated by TRIM3; leading to proteasomal degradation. As to expression, highest levels in the neocortex, part of the hippocampus, the granule cell layer of the cerebellum, the glomerular layer of the olfactory bulb, the inner plexiform layer of the retina, the ventral and dorsal horn of the spinal cord, the neuromuscular junction and the submandibular ganglion.

The protein resides in the cell membrane. It is found in the postsynaptic density. The protein localises to the synapse. Part of the postsynaptic scaffold in neuronal cells. The polypeptide is Disks large-associated protein 1 (Dlgap1) (Mus musculus (Mouse)).